We begin with the raw amino-acid sequence, 226 residues long: Chalcone--flavanone isomerase 3 (226 aa).

The substrate site is built by threonine 49, asparagine 114, and serine 191.

The protein belongs to the chalcone isomerase family.

The catalysed reaction is a chalcone = a flavanone.. It functions in the pathway secondary metabolite biosynthesis; flavonoid biosynthesis. Functionally, catalyzes the intramolecular cyclization of bicyclic chalcones into tricyclic (S)-flavanones. Responsible for the isomerization of 4,2',4',6'-tetrahydroxychalcone (also termed chalcone) into naringenin. This chain is Chalcone--flavanone isomerase 3 (CHI3), found in Glycine max (Soybean).